The primary structure comprises 97 residues: U6-theraphotoxin-Hhn1a 3 (97 aa).

A signal peptide spans 1-33; the sequence is MLIKQFSRRSKNTKVQILLAFAALFVLAVGSYA. Positions 34-61 are excised as a propeptide; it reads SESKKLDLRDALFSAMFSADYQLNPQER. Cystine bridges form between Cys-63/Cys-77, Cys-70/Cys-82, and Cys-76/Cys-89.

Belongs to the neurotoxin 10 (Hwtx-1) family. 12 (Hntx-12) subfamily. In terms of tissue distribution, expressed by the venom gland.

The protein resides in the secreted. Functionally, ion channel inhibitor. The sequence is that of U6-theraphotoxin-Hhn1a 3 from Cyriopagopus hainanus (Chinese bird spider).